Consider the following 478-residue polypeptide: ATP synthase subunit beta (478 aa).

151 to 158 contributes to the ATP binding site; that stretch reads GGAGVGKT.

Belongs to the ATPase alpha/beta chains family. F-type ATPases have 2 components, CF(1) - the catalytic core - and CF(0) - the membrane proton channel. CF(1) has five subunits: alpha(3), beta(3), gamma(1), delta(1), epsilon(1). CF(0) has three main subunits: a(1), b(2) and c(9-12). The alpha and beta chains form an alternating ring which encloses part of the gamma chain. CF(1) is attached to CF(0) by a central stalk formed by the gamma and epsilon chains, while a peripheral stalk is formed by the delta and b chains.

The protein localises to the cell inner membrane. The catalysed reaction is ATP + H2O + 4 H(+)(in) = ADP + phosphate + 5 H(+)(out). Functionally, produces ATP from ADP in the presence of a proton gradient across the membrane. The catalytic sites are hosted primarily by the beta subunits. This chain is ATP synthase subunit beta, found in Xanthobacter autotrophicus (strain ATCC BAA-1158 / Py2).